The primary structure comprises 622 residues: MRYLGNKTNLLNFIQQVIKKHDIQGQTFADLFAGTGSVGDYFKGEYTVLSNDYMYFSKVISEAKLLNSEKPKFDSFVKRYGKTPFQWLNEREYTPNDGYFVYNNYTPRAERMYLTEENALKIDGMRLDIEELFQEGVISKAEYSYLLASLLESVTKVSNTSGTYQAFFKFWESRALKKFTIMPLEMKDSLSVSKDNRCFNKNTNRLVREISGDIAYIDPPYTITQYTNSYHVLETIARYDNPELFGKTGRRVKREFSGYSNKSKAYYEFEDLFRQINFTHVLVSYSNQSIVPLDELVDLARRFAVDGIVEVETNEYREYSTNNSSMKGEGKKLQEVIIYFKKNLETNKSPLNYAGSKDDVIPRIFKLLPKHVTTFVDAMGGAFNVGANRTALNKVVYNEYHPFVFEMMQMIVNTPADELIRNVEQIVTRYSLEKKGKEAFNRLRDHYNNEEQTPINLYTLNIYSFQNILRFNQAKKYNTPIGNNEFNEGYKDRITRFVTRAPEVEMRLGSYSAINFNEYDDDTVFYFDPPYLVTTAGYNDGKRGFDGWDAEQEASLLKYLTELDSAGKKFMLSNVLEHKGKTNHLLMEWIQHHGFNVNTIGETGIKYPRREILVTNYNTFER.

This sequence belongs to the N(4)/N(6)-methyltransferase family.

The enzyme catalyses a 2'-deoxyadenosine in DNA + S-adenosyl-L-methionine = an N(6)-methyl-2'-deoxyadenosine in DNA + S-adenosyl-L-homocysteine + H(+). In terms of biological role, an alpha subtype methylase that modifies unknown specific adenine residues, and protects the DNA from cleavage by the LlaI endonuclease. The chain is Modification methylase LlaI from Lactococcus lactis subsp. lactis (Streptococcus lactis).